Consider the following 539-residue polypeptide: Copine-C (539 aa).

C2 domains follow at residues 1–120 and 128–251; these read MIPS…KIVA and VTGK…PLIN. The Ca(2+) site is built by leucine 23, aspartate 24, aspartate 30, aspartate 83, aspartate 85, and aspartate 98. The 218-residue stretch at 290–507 folds into the VWFA domain; the sequence is SLMTAIDCTG…ALAQETLKEI (218 aa).

Belongs to the copine family. The cofactor is Ca(2+).

The sequence is that of Copine-C (cpnC) from Dictyostelium discoideum (Social amoeba).